Reading from the N-terminus, the 128-residue chain is MTLEEIVSAIEQLTVAELAELVKMLEDKFGVSASAPVMAMPMAGAAAGGAAAAEEKTEFDVVLKSFGAKKIEVIKVIREITGLGLKEAKDLVEKAGTPDAVVKQGAAKEEAEEIKKKLEAAGAEVELK.

Belongs to the bacterial ribosomal protein bL12 family. In terms of assembly, homodimer. Part of the ribosomal stalk of the 50S ribosomal subunit. Forms a multimeric L10(L12)X complex, where L10 forms an elongated spine to which 2 to 4 L12 dimers bind in a sequential fashion. Binds GTP-bound translation factors.

Forms part of the ribosomal stalk which helps the ribosome interact with GTP-bound translation factors. Is thus essential for accurate translation. In Thermosipho africanus (strain TCF52B), this protein is Large ribosomal subunit protein bL12.